We begin with the raw amino-acid sequence, 483 residues long: MAATDLERFSNAEPEPRSLSLGGHVGFDSLPDQLVSKSVTQGFSFNILCVGETGIGKSTLMNTLFNTTFETEEASHHEACVRLRPQTYDLQESNVQLKLTIVDAVGFGDQINKDESYRPIVDYIDAQFENYLQEELKIRRSLFDYHDTRIHVCLYFITPTGHSLKSLDLVTMKKLDSKVNIIPIIAKADTISKSELHKFKIKIMGELVSNGVQIYQFPTDDEAVAEINAVMNAHLPFAVVGSTEEVKVGNKLVRARQYPWGVVQVENENHCDFVKLREMLIRVNMEDLREQTHSRHYELYRRCKLEEMGFQDSDGDSQPFSLQETYEAKRKEFLSELQRKEEEMRQMFVNKVKETELELKEKERELHEKFEHLKRVHQEEKRKVEEKRRELEEETNAFNRRKAAVEALQSQALHATSQQPLRKDKDKKNRSDIGAHQPGMSLSSSKVMMTKASVEPLNCSSWWPAIQCCSCLVRDATWREGFL.

A compositionally biased stretch (basic and acidic residues) spans 1-16; the sequence is MAATDLERFSNAEPEP. A disordered region spans residues 1–22; that stretch reads MAATDLERFSNAEPEPRSLSLG. Alanine 2 carries the N-acetylalanine modification. Serine 10 is subject to Phosphoserine. The Septin-type G domain maps to 41 to 307; the sequence is QGFSFNILCV…ELYRRCKLEE (267 aa). The interval 51-58 is G1 motif; that stretch reads GETGIGKS. GTP-binding positions include 51 to 58, glycine 106, 187 to 195, glycine 241, and arginine 256; these read GETGIGKS and KADTISKSE. The G3 motif stretch occupies residues 103 to 106; that stretch reads DAVG. Positions 186–189 are G4 motif; that stretch reads AKAD. A coiled-coil region spans residues 320-413; that stretch reads FSLQETYEAK…AVEALQSQAL (94 aa). Positions 411 to 420 are enriched in polar residues; that stretch reads QALHATSQQP. A disordered region spans residues 411–443; the sequence is QALHATSQQPLRKDKDKKNRSDIGAHQPGMSLS. The segment covering 421 to 433 has biased composition (basic and acidic residues); it reads LRKDKDKKNRSDI.

It belongs to the TRAFAC class TrmE-Era-EngA-EngB-Septin-like GTPase superfamily. Septin GTPase family. Septins polymerize into heterooligomeric protein complexes that form filaments, and can associate with cellular membranes, actin filaments and microtubules. GTPase activity is required for filament formation. Interacts with CDK14. Interacts with SEPTIN5. Interacts with SEPTIN7. Interacts with SEPTIN4. Interacts with VAMP2; the interaction inhibits interaction of VAMP2 with SYP. Interacts with STX1A. In terms of tissue distribution, widely expressed, including in brain, heart and platelets; most abundant in aorta. Isoform 2 is expressed at low levels in specific brain areas, such as occipital pole, frontal lobe, temporal lobe and putamen. Isoform 1 and 3 are highly expressed in specific brain areas, such as occipital pole, frontal lobe, temporal lobe and putamen. Isoform 2 is highly expressed in prostate, testis and ovary. Isoform 1 and isoform 3 are expressed at low levels in prostate, testis and ovary.

It localises to the cytoplasm. The protein resides in the cytoskeleton. The protein localises to the synapse. Its subcellular location is the cell projection. It is found in the axon. It localises to the cytoplasmic vesicle. The protein resides in the secretory vesicle. The protein localises to the synaptic vesicle membrane. Its subcellular location is the presynapse. In terms of biological role, filament-forming cytoskeletal GTPase. May play a role in platelet secretion. Seems to participate in the process of SNARE complex formation in synaptic vesicles. Its function is as follows. Stabilizes BACE1 protein levels and promotes the sorting and accumulation of BACE1 to the recycling or endosomal compartments, modulating the beta-amyloidogenic processing of APP. The sequence is that of Septin-8 from Homo sapiens (Human).